A 197-amino-acid chain; its full sequence is FMN-dependent NADH:quinone oxidoreductase (197 aa).

Serine 10 contacts FMN.

Belongs to the azoreductase type 1 family. As to quaternary structure, homodimer. Requires FMN as cofactor.

It carries out the reaction 2 a quinone + NADH + H(+) = 2 a 1,4-benzosemiquinone + NAD(+). The catalysed reaction is N,N-dimethyl-1,4-phenylenediamine + anthranilate + 2 NAD(+) = 2-(4-dimethylaminophenyl)diazenylbenzoate + 2 NADH + 2 H(+). Functionally, quinone reductase that provides resistance to thiol-specific stress caused by electrophilic quinones. In terms of biological role, also exhibits azoreductase activity. Catalyzes the reductive cleavage of the azo bond in aromatic azo compounds to the corresponding amines. In Mycoplasma pneumoniae (strain ATCC 29342 / M129 / Subtype 1) (Mycoplasmoides pneumoniae), this protein is FMN-dependent NADH:quinone oxidoreductase.